Here is a 455-residue protein sequence, read N- to C-terminus: SVGFKAGVKDYKLTYYTPDNQTKDTDILAAFRVTPQPGVPPEEAGAAVAAESSTGTWTTVWTDGLTSLDRYKGRCYHIEPVAGEENQFIAYVAYPLDLFEEGSVTNMFTSIVGNVFGFKALRALRLEDLRIPNAYVKTFQGPPHGIQVERDKLNKYGRPLLGCTIKPKLGLSAKNYGRAVYECLRGGLDFTKDDENVNSQPFMRWRDRFLFCAEALYKAQAETGEIKGHYLNATAGTCEEMIKRAVFARELGVPIVMHDYITGGFTANTSLAHYCRDNGLLLHIHRAMHAVIDRQKNHGMHFRVLAKALRLSGGDHIHSGTVVGKLEGEREITLGFVDLLRDDFVEKDRSRGIYFTQDWVSLPGVLPVASGGIHVWHMPALTEIFGDDSVLQFGGGTLGHPWGNAPGAVANRVALEACVQARNEGRDLASEGNQIIREASKWSPELAAACEVWKE.

Residue lysine 5 is modified to N6,N6,N6-trimethyllysine. Substrate contacts are provided by asparagine 114 and threonine 164. Lysine 166 (proton acceptor) is an active-site residue. Lysine 168 is a substrate binding site. Lysine 192, aspartate 194, and glutamate 195 together coordinate Mg(2+). The residue at position 192 (lysine 192) is an N6-carboxylysine. Histidine 285 acts as the Proton acceptor in catalysis. Substrate is bound by residues arginine 286, histidine 318, and serine 370.

The protein belongs to the RuBisCO large chain family. Type I subfamily. Heterohexadecamer of 8 large chains and 8 small chains; disulfide-linked. The disulfide link is formed within the large subunit homodimers. Mg(2+) is required as a cofactor. The disulfide bond which can form in the large chain dimeric partners within the hexadecamer appears to be associated with oxidative stress and protein turnover.

It localises to the plastid. The protein localises to the chloroplast. The enzyme catalyses 2 (2R)-3-phosphoglycerate + 2 H(+) = D-ribulose 1,5-bisphosphate + CO2 + H2O. It catalyses the reaction D-ribulose 1,5-bisphosphate + O2 = 2-phosphoglycolate + (2R)-3-phosphoglycerate + 2 H(+). Its function is as follows. RuBisCO catalyzes two reactions: the carboxylation of D-ribulose 1,5-bisphosphate, the primary event in carbon dioxide fixation, as well as the oxidative fragmentation of the pentose substrate in the photorespiration process. Both reactions occur simultaneously and in competition at the same active site. This Lupinus microcarpus (Chick lupine) protein is Ribulose bisphosphate carboxylase large chain.